Here is a 235-residue protein sequence, read N- to C-terminus: Putative N-acetylmannosamine-6-phosphate 2-epimerase (235 aa).

This sequence belongs to the NanE family.

The catalysed reaction is an N-acyl-D-glucosamine 6-phosphate = an N-acyl-D-mannosamine 6-phosphate. It participates in amino-sugar metabolism; N-acetylneuraminate degradation; D-fructose 6-phosphate from N-acetylneuraminate: step 3/5. Its function is as follows. Converts N-acetylmannosamine-6-phosphate (ManNAc-6-P) to N-acetylglucosamine-6-phosphate (GlcNAc-6-P). The sequence is that of Putative N-acetylmannosamine-6-phosphate 2-epimerase from Aliivibrio fischeri (strain ATCC 700601 / ES114) (Vibrio fischeri).